A 277-amino-acid chain; its full sequence is Zinc transporter ZupT (277 aa).

8 helical membrane-spanning segments follow: residues 7–27, 38–58, 73–93, 133–155, 165–187, 196–216, 220–240, and 257–277; these read VLLA…GSAI, FLAV…FVEI, VLAS…IAVI, AGVL…AFSA, AIAV…PIYY, FLYS…GYVV, FFTP…MVYI, and LCIL…LLFL. Residues Asn145 and Glu148 each contribute to the Fe(2+) site. Zn(2+) is bound by residues Glu148 and His173. 3 residues coordinate Fe(2+): Asn174, Glu177, and Glu206. Glu177 is a binding site for Zn(2+).

Belongs to the ZIP transporter (TC 2.A.5) family. ZupT subfamily.

Its subcellular location is the cell inner membrane. It catalyses the reaction Zn(2+)(in) = Zn(2+)(out). In terms of biological role, mediates zinc uptake. May also transport other divalent cations. This Nitratidesulfovibrio vulgaris (strain ATCC 29579 / DSM 644 / CCUG 34227 / NCIMB 8303 / VKM B-1760 / Hildenborough) (Desulfovibrio vulgaris) protein is Zinc transporter ZupT.